Here is a 264-residue protein sequence, read N- to C-terminus: S-adenosylmethionine decarboxylase proenzyme (264 aa).

The active-site Schiff-base intermediate with substrate; via pyruvic acid is serine 112. A Pyruvic acid (Ser); by autocatalysis modification is found at serine 112. The Proton acceptor; for processing activity role is filled by histidine 117. Residue cysteine 140 is the Proton donor; for catalytic activity of the active site.

This sequence belongs to the prokaryotic AdoMetDC family. Type 2 subfamily. As to quaternary structure, heterooctamer of four alpha and four beta chains arranged as a tetramer of alpha/beta heterodimers. It depends on pyruvate as a cofactor. Post-translationally, is synthesized initially as an inactive proenzyme. Formation of the active enzyme involves a self-maturation process in which the active site pyruvoyl group is generated from an internal serine residue via an autocatalytic post-translational modification. Two non-identical subunits are generated from the proenzyme in this reaction, and the pyruvate is formed at the N-terminus of the alpha chain, which is derived from the carboxyl end of the proenzyme. The post-translation cleavage follows an unusual pathway, termed non-hydrolytic serinolysis, in which the side chain hydroxyl group of the serine supplies its oxygen atom to form the C-terminus of the beta chain, while the remainder of the serine residue undergoes an oxidative deamination to produce ammonia and the pyruvoyl group blocking the N-terminus of the alpha chain.

The enzyme catalyses S-adenosyl-L-methionine + H(+) = S-adenosyl 3-(methylsulfanyl)propylamine + CO2. Its pathway is amine and polyamine biosynthesis; S-adenosylmethioninamine biosynthesis; S-adenosylmethioninamine from S-adenosyl-L-methionine: step 1/1. Its function is as follows. Catalyzes the decarboxylation of S-adenosylmethionine to S-adenosylmethioninamine (dcAdoMet), the propylamine donor required for the synthesis of the polyamines spermine and spermidine from the diamine putrescine. The polypeptide is S-adenosylmethionine decarboxylase proenzyme (Serratia proteamaculans (strain 568)).